The chain runs to 313 residues: Putative glycosyltransferase ORF313 (313 aa).

This sequence belongs to the glycosyltransferase group 1 family. Glycosyltransferase 4 subfamily.

In Acidianus hospitalis (AFV-1), this protein is Putative glycosyltransferase ORF313.